The sequence spans 98 residues: MSQISRDEVAHLARLSRLALTDAELDSFAGQLDAILTHVSQVQAVDVTGVEPTDNPLKDLNVTRPDEPMPCLTQAEALAEAPEAVDGRFAVPQILGDE.

Belongs to the GatC family. In terms of assembly, heterotrimer of A, B and C subunits.

It catalyses the reaction L-glutamyl-tRNA(Gln) + L-glutamine + ATP + H2O = L-glutaminyl-tRNA(Gln) + L-glutamate + ADP + phosphate + H(+). The catalysed reaction is L-aspartyl-tRNA(Asn) + L-glutamine + ATP + H2O = L-asparaginyl-tRNA(Asn) + L-glutamate + ADP + phosphate + 2 H(+). Allows the formation of correctly charged Asn-tRNA(Asn) or Gln-tRNA(Gln) through the transamidation of misacylated Asp-tRNA(Asn) or Glu-tRNA(Gln) in organisms which lack either or both of asparaginyl-tRNA or glutaminyl-tRNA synthetases. The reaction takes place in the presence of glutamine and ATP through an activated phospho-Asp-tRNA(Asn) or phospho-Glu-tRNA(Gln). The sequence is that of Aspartyl/glutamyl-tRNA(Asn/Gln) amidotransferase subunit C from Mycobacterium avium (strain 104).